The sequence spans 287 residues: Large ribosomal subunit protein uL2 (287 aa).

Positions 221–287 are disordered; the sequence is RGSVMNPCDH…SKRSRGGRDS (67 aa). Residues 258-287 show a composition bias toward basic residues; that stretch reads KTRKRNKPSNKFVLRKRRKTSKRSRGGRDS.

The protein belongs to the universal ribosomal protein uL2 family. In terms of assembly, part of the 50S ribosomal subunit. Forms a bridge to the 30S subunit in the 70S ribosome.

Its function is as follows. One of the primary rRNA binding proteins. Required for association of the 30S and 50S subunits to form the 70S ribosome, for tRNA binding and peptide bond formation. It has been suggested to have peptidyltransferase activity; this is somewhat controversial. Makes several contacts with the 16S rRNA in the 70S ribosome. The chain is Large ribosomal subunit protein uL2 from Synechococcus sp. (strain WH7803).